Consider the following 141-residue polypeptide: uncharacterized protein (141 aa).

Basic and acidic residues predominate over residues 1–17 (MNKSESENDSEYHKEYS). Positions 1–24 (MNKSESENDSEYHKEYSESSDPED) are disordered. The stretch at 52 to 115 (IQNLNNNVKE…QMLFEKMRDM (64 aa)) forms a coiled coil.

This is an uncharacterized protein from Acanthamoeba polyphaga (Amoeba).